The sequence spans 595 residues: Tyrosine-protein phosphatase cdcA (595 aa).

The interval 32-57 (TPFPYPAEQPKSPSKRRAQASPSKKR) is disordered. Basic residues predominate over residues 44 to 57 (PSKRRAQASPSKKR). In terms of domain architecture, Tyrosine-protein phosphatase spans 233-381 (LPSTVSEVRS…QGSFREWWFE (149 aa)). The Phosphocysteine intermediate role is filled by cysteine 322. Positions 392 to 595 (QPNPVTPGRS…GSPVRVKAQA (204 aa)) are disordered. The span at 449–461 (RKSHRKDSRHHPY) shows a compositional bias: basic residues. Residues 471–483 (VDKDTRKTRRSTD) are compositionally biased toward basic and acidic residues. The span at 502-526 (SKSPAASPGQRSISYSATVTASYTL) shows a compositional bias: polar residues.

The protein belongs to the protein-tyrosine phosphatase family. Non-receptor class CDC14 subfamily.

It is found in the nucleus. The protein resides in the cytoplasm. The protein localises to the cell septum. The catalysed reaction is O-phospho-L-tyrosyl-[protein] + H2O = L-tyrosyl-[protein] + phosphate. Protein phosphatase which antagonizes mitotic cyclin-dependent kinase nimX, the inactivation of which is essential for exit from mitosis. To access its substrates, is released from nucleolar sequestration during mitosis. Plays an essential in coordinating the nuclear division cycle with cytokinesis through the cytokinesis checkpoint. Involved in chromosome segregation, where it is required for meiosis I spindle dissambly as well as for establishing two consecutive chromosome segregation phases. Required for the transcription of the two major endoglucanase genes eglA and eglB and growth on synthetic cellulose as the sole carbon source. The chain is Tyrosine-protein phosphatase cdcA (cdcA) from Emericella nidulans (strain FGSC A4 / ATCC 38163 / CBS 112.46 / NRRL 194 / M139) (Aspergillus nidulans).